The primary structure comprises 444 residues: NAD-capped RNA hydrolase NUDT12 (444 aa).

ANK repeat units follow at residues 11–40 and 60–80; these read EIISQFHYSAAEGDIAKLTAILSHSPSLLN and SRQTALDIAKFWGYKHIANLL. At lysine 167 the chain carries N6-succinyllysine. Residues cysteine 266 and cysteine 269 each contribute to the Zn(2+) site. An N6-succinyllysine modification is found at lysine 274. Zn(2+)-binding residues include cysteine 284 and cysteine 289. Substrate contacts are provided by residues tyrosine 300, 336–338, glutamate 352, glutamate 356, and glutamate 397; that span reads AGF. The Nudix hydrolase domain occupies 301–435; the sequence is PRVDPVVIMQ…SRAIAHQLIK (135 aa). Positions 336, 352, 356, and 397 each coordinate Mg(2+). The Nudix box motif lies at 337-358; that stretch reads GFIEPGETIEDAVRREVEEESG. A Microbody targeting signal motif is present at residues 442–444; sequence PNL.

Belongs to the Nudix hydrolase family. NudC subfamily. In terms of assembly, homodimer. Homodimerization is essential for its catalytic activity and protein stability. Interacts (via ANK repeats) with BLMH. Mg(2+) is required as a cofactor. It depends on Zn(2+) as a cofactor.

Its subcellular location is the cytoplasm. The protein resides in the peroxisome. The protein localises to the cytoplasmic granule. It catalyses the reaction a 5'-end NAD(+)-phospho-ribonucleoside in mRNA + H2O = a 5'-end phospho-adenosine-phospho-ribonucleoside in mRNA + beta-nicotinamide D-ribonucleotide + 2 H(+). The catalysed reaction is NAD(+) + H2O = beta-nicotinamide D-ribonucleotide + AMP + 2 H(+). It carries out the reaction NADH + H2O = reduced beta-nicotinamide D-ribonucleotide + AMP + 2 H(+). The enzyme catalyses NADPH + H2O = reduced beta-nicotinamide D-ribonucleotide + adenosine 2',5'-bisphosphate + 2 H(+). MRNA decapping enzyme that specifically removes the nicotinamide adenine dinucleotide (NAD) cap from a subset of mRNAs by hydrolyzing the diphosphate linkage to produce nicotinamide mononucleotide (NMN) and 5' monophosphate mRNA. The NAD-cap is present at the 5'-end of some RNAs; in contrast to the canonical N7 methylguanosine (m7G) cap, the NAD cap promotes mRNA decay. Preferentially acts on NAD-capped transcripts in response to nutrient stress. Also acts on free nicotinamide adenine dinucleotide molecules: hydrolyzes NAD(H) into NMN(H) and AMP, and NADPH into NMNH and 2',5'-ADP. May act to regulate the concentration of peroxisomal nicotinamide nucleotide cofactors required for oxidative metabolism in this organelle. Regulates the levels of circadian clock components PER1, PER2, PER3 and CRY2 in the liver. The sequence is that of NAD-capped RNA hydrolase NUDT12 from Bos taurus (Bovine).